The sequence spans 74 residues: uncharacterized protein (74 aa).

The protein resides in the mitochondrion. This is an uncharacterized protein from Marchantia polymorpha (Common liverwort).